A 418-amino-acid polypeptide reads, in one-letter code: Elongation factor Tu, chloroplastic (418 aa).

One can recognise a tr-type G domain in the interval 10–214; it reads KPHVNIGTIG…NVDSYIPTPQ (205 aa). The interval 19-26 is G1; sequence GHVDHGKT. 19–26 contributes to the GTP binding site; sequence GHVDHGKT. T26 is a Mg(2+) binding site. Residues 60–64 are G2; the sequence is GITIN. The tract at residues 81–84 is G3; that stretch reads DCPG. Residues 81-85 and 136-139 each bind GTP; these read DCPGH and NKED. Positions 136 to 139 are G4; the sequence is NKED. A G5 region spans residues 174 to 176; sequence SAL.

Belongs to the TRAFAC class translation factor GTPase superfamily. Classic translation factor GTPase family. EF-Tu/EF-1A subfamily.

It is found in the plastid. Its subcellular location is the chloroplast. The catalysed reaction is GTP + H2O = GDP + phosphate + H(+). GTP hydrolase that promotes the GTP-dependent binding of aminoacyl-tRNA to the A-site of ribosomes during protein biosynthesis. In Chlamydomonas reinhardtii (Chlamydomonas smithii), this protein is Elongation factor Tu, chloroplastic (tufA).